The following is a 239-amino-acid chain: Protein TIPIN homolog (239 aa).

Composition is skewed to acidic residues over residues 1-14 (MDEMDDFFGNDELD) and 156-166 (DGADDDEDDLF). 2 disordered regions span residues 1 to 38 (MDEMDDFFGNDELDREPSPFGEEAIEDNTGEEGSRRII) and 135 to 239 (ESTD…NNDW). 2 stretches are compositionally biased toward basic and acidic residues: residues 169–193 (LPEKETPTKPINHTEKVVDSPEKKN) and 206–223 (YRMMEEERLREEQEAREA). Positions 224–239 (EAEDELMEDFDLNNDW) are enriched in acidic residues.

It belongs to the CSM3 family.

It is found in the cytoplasm. Its subcellular location is the nucleus. Functionally, required for normal progression of S-phase. Important for cell survival after DNA damage or replication stress. The polypeptide is Protein TIPIN homolog (Caenorhabditis briggsae).